We begin with the raw amino-acid sequence, 460 residues long: Acetyl-coenzyme A carboxylase carboxyl transferase subunit beta, chloroplastic (460 aa).

The region spanning 179-460 is the CoA carboxyltransferase N-terminal domain; it reads LWVQCESCYG…GFFPLTQNGN (282 aa). Zn(2+) contacts are provided by Cys-183, Cys-186, Cys-202, and Cys-205. Residues 183–205 form a C4-type zinc finger; that stretch reads CESCYGLNYKKFFKSKMNICEHC.

The protein belongs to the AccD/PCCB family. In terms of assembly, acetyl-CoA carboxylase is a heterohexamer composed of biotin carboxyl carrier protein, biotin carboxylase and 2 subunits each of ACCase subunit alpha and ACCase plastid-coded subunit beta (accD). Zn(2+) serves as cofactor.

The protein localises to the plastid. The protein resides in the chloroplast stroma. It catalyses the reaction N(6)-carboxybiotinyl-L-lysyl-[protein] + acetyl-CoA = N(6)-biotinyl-L-lysyl-[protein] + malonyl-CoA. It functions in the pathway lipid metabolism; malonyl-CoA biosynthesis; malonyl-CoA from acetyl-CoA: step 1/1. Component of the acetyl coenzyme A carboxylase (ACC) complex. Biotin carboxylase (BC) catalyzes the carboxylation of biotin on its carrier protein (BCCP) and then the CO(2) group is transferred by the transcarboxylase to acetyl-CoA to form malonyl-CoA. This is Acetyl-coenzyme A carboxylase carboxyl transferase subunit beta, chloroplastic from Cicer arietinum (Chickpea).